The sequence spans 78 residues: Protein SlyX homolog (78 aa).

It belongs to the SlyX family.

The sequence is that of Protein SlyX homolog from Xanthomonas campestris pv. campestris (strain 8004).